The sequence spans 142 residues: Hemoglobin subunit alpha (142 aa).

The region spanning 2-142 is the Globin domain; it reads VLSSADKNNV…VSTVLTSKYR (141 aa). At S4 the chain carries Phosphoserine. N6-succinyllysine occurs at positions 8 and 12. Residue K17 is modified to N6-acetyllysine; alternate. K17 bears the N6-succinyllysine; alternate mark. At Y25 the chain carries Phosphotyrosine. S36 carries the phosphoserine modification. An N6-succinyllysine modification is found at K41. Phosphoserine is present on S50. H59 is a binding site for O2. Position 88 (H88) interacts with heme b. A Phosphoserine modification is found at S103. A Phosphothreonine modification is found at T109. S125 is modified (phosphoserine). T135 and T138 each carry phosphothreonine. S139 carries the post-translational modification Phosphoserine.

This sequence belongs to the globin family. As to quaternary structure, heterotetramer of two alpha chains and two beta chains. Red blood cells.

Its function is as follows. Involved in oxygen transport from the lung to the various peripheral tissues. Functionally, hemopressin acts as an antagonist peptide of the cannabinoid receptor CNR1. Hemopressin-binding efficiently blocks cannabinoid receptor CNR1 and subsequent signaling. The sequence is that of Hemoglobin subunit alpha (HBA) from Panthera onca (Jaguar).